A 228-amino-acid polypeptide reads, in one-letter code: MLETTQALFHLGPLAVGTTVVTTWGIMVVLSLGAWLASRRLRLDPGPFQVALEGVVQTIRAAVEEVVPRRADTVFPFVATLWLFIGIANLSSLIPRVHSPTADLSATTALALLVFFSVHWFGIRIQGLRPYLRHYLSPSPFLLPFHVIGEITRTLALAVRLFGNMMSLETAALLVLLVAGLFAPIPLLMLHIVEALVQAYIFGMLTLVYIAGAIQSLEARRSPKEEET.

6 helical membrane passes run 16–36, 74–94, 103–123, 139–159, 173–193, and 194–214; these read VGTTVVTTWGIMVVLSLGAWL, VFPFVATLWLFIGIANLSSLI, DLSATTALALLVFFSVHWFGI, SPFLLPFHVIGEITRTLALAV, LLVLLVAGLFAPIPLLMLHIV, and EALVQAYIFGMLTLVYIAGAI.

The protein belongs to the ATPase A chain family. In terms of assembly, F-type ATPases have 2 components, CF(1) - the catalytic core - and CF(0) - the membrane proton channel. CF(1) has five subunits: alpha(3), beta(3), gamma(1), delta(1), epsilon(1). CF(0) has three main subunits: a(1), b(2) and c(9-12). The alpha and beta chains form an alternating ring which encloses part of the gamma chain. CF(1) is attached to CF(0) by a central stalk formed by the gamma and epsilon chains, while a peripheral stalk is formed by the delta and b chains.

The protein localises to the cell inner membrane. Its function is as follows. Key component of the proton channel; it plays a direct role in the translocation of protons across the membrane. The sequence is that of ATP synthase subunit a 2 from Pelobacter propionicus (strain DSM 2379 / NBRC 103807 / OttBd1).